Consider the following 32-residue polypeptide: Delta-actitoxin-Eqd1a (32 aa).

This sequence belongs to the sea anemone short toxin (type III) family. In terms of processing, contains 4 disulfide bonds.

The protein resides in the secreted. It is found in the nematocyst. Binds specifically to sodium channels (Nav) of the axonal membrane of crayfish and prolongs the falling phase of the action potential. It also increases the maximum rates of rise of both action potential and resting potential. Is only active on crustaceans. This Entacmaea quadricolor (Bubble-tip anemone) protein is Delta-actitoxin-Eqd1a.